A 98-amino-acid chain; its full sequence is NADH-ubiquinone oxidoreductase chain 4L (98 aa).

Helical transmembrane passes span 1–21, 29–49, and 61–81; these read MSMV…GLLM, SLLC…VTIL, and IILL…LVMV.

It belongs to the complex I subunit 4L family. As to quaternary structure, core subunit of respiratory chain NADH dehydrogenase (Complex I) which is composed of 45 different subunits.

The protein localises to the mitochondrion inner membrane. The enzyme catalyses a ubiquinone + NADH + 5 H(+)(in) = a ubiquinol + NAD(+) + 4 H(+)(out). Its function is as follows. Core subunit of the mitochondrial membrane respiratory chain NADH dehydrogenase (Complex I) which catalyzes electron transfer from NADH through the respiratory chain, using ubiquinone as an electron acceptor. Part of the enzyme membrane arm which is embedded in the lipid bilayer and involved in proton translocation. The sequence is that of NADH-ubiquinone oxidoreductase chain 4L (MT-ND4L) from Phoca fasciata (Ribbon seal).